The chain runs to 465 residues: Citrate synthase-like protein (465 aa).

The interval 13 to 40 (HISDMVDSTKMNGNQSQDTAGRADTPVS) is disordered. Over residues 21 to 31 (TKMNGNQSQDT) the composition is skewed to polar residues. Active-site residues include H357 and D413.

It belongs to the citrate synthase family.

The protein operates within secondary metabolite biosynthesis. Its function is as follows. Citrate synthase-like protein; part of the gene cluster that mediates the biosynthesis of squalestatin S1 (SQS1, also known as zaragozic acid A), a heavily oxidized fungal polyketide that offers potent cholesterol lowering activity by targeting squalene synthase (SS). SQS1 is composed of a 2,8-dioxobicyclic[3.2.1]octane-3,4,5-tricarboxyclic acid core that is connected to two lipophilic polyketide arms. These initial steps feature the priming of an unusual benzoic acid starter unit onto the highly reducing polyketide synthase pks2, followed by oxaloacetate extension and product release to generate a tricarboxylic acid containing product. The phenylalanine ammonia lyase (PAL) M7 and the acyl-CoA ligase M9 are involved in transforming phenylalanine into benzoyl-CoA. The citrate synthase-like protein R3 is involved in connecting the C-alpha-carbons of the hexaketide chain and oxaloacetate to afford the tricarboxylic acid unit. The potential hydrolytic enzymes, M8 and M10, are in close proximity to pks2 and may participate in product release. On the other side, the tetraketide arm is synthesized by a the squalestatin tetraketide synthase pks1 and enzymatically esterified to the core in the last biosynthetic step, by the acetyltransferase M4. The biosynthesis of the tetraketide must involve 3 rounds of chain extension. After the first and second rounds methyl-transfer occurs, and in all rounds of extension the ketoreductase and dehydratase are active. The enoyl reductase and C-MeT of pks1 are not active in the final round of extension. The acetyltransferase M4 appears to have a broad substrate selectivity for its acyl CoA substrate, allowing the in vitro synthesis of novel squalestatins. The biosynthesis of SQS1 requires several oxidative steps likely performed by oxidoreductases M1, R1 and R2. Finally, in support of the identification of the cluster as being responsible for SQS1 production, the cluster contains a gene encoding a putative squalene synthase (SS) R6, suggesting a likely mechanism for self-resistance. This is Citrate synthase-like protein from Phoma sp. (strain ATCC 20986 / MF5453).